We begin with the raw amino-acid sequence, 101 residues long: Iron-sulfur cluster assembly protein CyaY (101 aa).

It belongs to the frataxin family.

Its function is as follows. Involved in iron-sulfur (Fe-S) cluster assembly. May act as a regulator of Fe-S biogenesis. This chain is Iron-sulfur cluster assembly protein CyaY, found in Actinobacillus pleuropneumoniae serotype 5b (strain L20).